Here is an 876-residue protein sequence, read N- to C-terminus: Leucine--tRNA ligase (876 aa).

Residues 1–20 (MATERYNPRDAEPRWQQKWN) are disordered. A 'HIGH' region motif is present at residues 43-53 (PYPSGRIHMGH). The 'KMSKS' region motif lies at 632 to 636 (KMSKS). Lysine 635 lines the ATP pocket.

It belongs to the class-I aminoacyl-tRNA synthetase family.

It is found in the cytoplasm. The enzyme catalyses tRNA(Leu) + L-leucine + ATP = L-leucyl-tRNA(Leu) + AMP + diphosphate. This chain is Leucine--tRNA ligase, found in Rhizobium leguminosarum bv. trifolii (strain WSM2304).